The following is a 302-amino-acid chain: tRNA dimethylallyltransferase (302 aa).

7-14 (GPTASGKS) is a binding site for ATP. A substrate-binding site is contributed by 9–14 (TASGKS). 2 interaction with substrate tRNA regions span residues 32–35 (DSMQ) and 156–160 (QRILR).

It belongs to the IPP transferase family. As to quaternary structure, monomer. Mg(2+) serves as cofactor.

It carries out the reaction adenosine(37) in tRNA + dimethylallyl diphosphate = N(6)-dimethylallyladenosine(37) in tRNA + diphosphate. Functionally, catalyzes the transfer of a dimethylallyl group onto the adenine at position 37 in tRNAs that read codons beginning with uridine, leading to the formation of N6-(dimethylallyl)adenosine (i(6)A). This chain is tRNA dimethylallyltransferase, found in Beijerinckia indica subsp. indica (strain ATCC 9039 / DSM 1715 / NCIMB 8712).